A 673-amino-acid polypeptide reads, in one-letter code: Probable lysophospholipase 4 (673 aa).

The signal sequence occupies residues 1 to 19 (MYVNYIGLFAFVQISLTLA). N-linked (GlcNAc...) asparagine glycans are attached at residues N72, N125, N191, N194, N272, N301, N374, N404, N409, N481, N516, N545, and N574. In terms of domain architecture, PLA2c spans 74–615 (TCSNDNLLRP…QEYCWDGTLA (542 aa)). The segment at 631–653 (TTSRAPSGTTSGTASSTTSSSVA) is disordered.

The protein belongs to the lysophospholipase family.

It localises to the secreted. The catalysed reaction is a 1-acyl-sn-glycero-3-phosphocholine + H2O = sn-glycerol 3-phosphocholine + a fatty acid + H(+). In terms of biological role, catalyzes the release of fatty acids from lysophospholipids. The polypeptide is Probable lysophospholipase 4 (plb4) (Schizosaccharomyces pombe (strain 972 / ATCC 24843) (Fission yeast)).